Here is a 905-residue protein sequence, read N- to C-terminus: uncharacterized protein (905 aa).

4 WD repeats span residues 42-82 (RSLK…FQAV), 86-128 (GYAR…SDPK), 136-175 (STLD…DSVS), and 177-217 (VNTQ…SDNY). Phosphoserine occurs at positions 394 and 397.

Belongs to the WD repeat mio family.

This is an uncharacterized protein from Schizosaccharomyces pombe (strain 972 / ATCC 24843) (Fission yeast).